Consider the following 1480-residue polypeptide: Cystic fibrosis transmembrane conductance regulator (1480 aa).

Residues 1 to 77 (MQRSPLEKAS…KLINALRRCF (77 aa)) lie on the Cytoplasmic side of the membrane. Residues 78 to 98 (FWRFMFYGIFLYLGEVTKAVQ) traverse the membrane as a helical segment. In terms of domain architecture, ABC transmembrane type-1 1 spans 81–365 (FMFYGIFLYL…WAVQTWYDSL (285 aa)). The Extracellular portion of the chain corresponds to 99–122 (PLLLGRIIASYDPDNKEERSIAIY). A helical transmembrane segment spans residues 123-146 (LGIGLCLLFIVRTLLLHPAIFGLH). Residues 147–195 (HIGMQMRIAMFSLIYKKTLKLSSRVLDKISIGQLVSLLSNNLNKFDEGL) lie on the Cytoplasmic side of the membrane. A helical membrane pass occupies residues 196 to 216 (ALAHFVWIAPLQVALLMGLIW). Over 217–222 (ELLQAS) the chain is Extracellular. The helical transmembrane segment at 223–243 (AFCGLGFLIVLALFQAGLGRM) threads the bilayer. At 244 to 298 (MMKYRDQRAGKISERLVITSEMIENIQSVKAYCWEEAMEKMIENLRQTELKLTRK) the chain is on the cytoplasmic side. Residues 299–319 (AAYVRYFNSSAFFFSGFFVVF) traverse the membrane as a helical segment. Over 320-339 (LSVLPYALIKGIVLRKIFTT) the chain is Extracellular. A helical membrane pass occupies residues 340 to 358 (ISFCIVLRMAVTRQFPWAV). Topologically, residues 359-858 (QTWYDSLGAI…YLRYITVHKS (500 aa)) are cytoplasmic. ATP-binding positions include Trp401, Ser434, 458-465 (GSTGAGKT), and Gln493. The 224-residue stretch at 423 to 646 (NGDDSLFFSN…RPDFSSKLMG (224 aa)) folds into the ABC transporter 1 domain. Cys524 carries S-palmitoyl cysteine lipidation. Ser549 and Ser660 each carry phosphoserine. Residues 654–831 (SAERRNSILT…EEINEEDLKE (178 aa)) are disordered R region. Ser670 is modified (phosphoserine; by PKA). A Phosphoserine modification is found at Ser686. Residue Lys688 forms a Glycyl lysine isopeptide (Lys-Gly) (interchain with G-Cter in ubiquitin) linkage. A phosphoserine mark is found at Ser700 and Ser712. At Thr717 the chain carries Phosphothreonine. Residues Ser737, Ser753, Ser768, Ser790, Ser795, and Ser813 each carry the phosphoserine modification. The helical transmembrane segment at 859–879 (LIFVLIWCLVIFLAEVAASLV) threads the bilayer. An ABC transmembrane type-1 2 domain is found at 859 to 1155 (LIFVLIWCLV…AVNSSIDVDS (297 aa)). The Extracellular segment spans residues 880 to 918 (VLWLLGNTPLQDKGNSTHSRNNSYAVIITSTSSYYVFYI). 2 N-linked (GlcNAc...) asparagine glycosylation sites follow: Asn894 and Asn900. A discontinuously helical transmembrane segment spans residues 919–939 (YVGVADTLLAMGFFRGLPLVH). Residues 940 to 990 (TLITVSKILHHKMLHSVLQAPMSTLNTLKAGGILNRFSKDIAILDDLLPLT) lie on the Cytoplasmic side of the membrane. Residues 991-1011 (IFDFIQLLLIVIGAIAVVAVL) form a helical membrane-spanning segment. Over 1012–1013 (QP) the chain is Extracellular. A helical membrane pass occupies residues 1014–1034 (YIFVATVPVIVAFIMLRAYFL). At 1035–1095 (QTSQQLKQLE…TANWFLYLST (61 aa)) the chain is on the cytoplasmic side. Residues 1096–1116 (LRWFQMRIEMIFVMFFIAVTF) form a helical membrane-spanning segment. Over 1117–1130 (ISILTTGEGEGRIG) the chain is Extracellular. A helical membrane pass occupies residues 1131–1151 (IILTLAMNIMSTLQWAVNSSI). At 1152 to 1480 (DVDSLMRSVS…TEEEVQDTRL (329 aa)) the chain is on the cytoplasmic side. An ABC transporter 2 domain is found at 1210 to 1443 (MTVKDLSAKY…RSLFRQAISP (234 aa)). Residues Tyr1219 and 1244–1251 (GRTGSGKS) each bind ATP. Residues 1386–1480 (RTLKQAFADC…TEEEVQDTRL (95 aa)) form an interaction with GORASP2 region. Residue Cys1395 is the site of S-palmitoyl cysteine attachment. A phosphoserine mark is found at Ser1444 and Ser1456. The tract at residues 1451-1480 (PHRNSSKGKSQPQIAALKEETEEEVQDTRL) is disordered. A compositionally biased stretch (acidic residues) spans 1470–1480 (ETEEEVQDTRL). A PDZ-binding motif is present at residues 1478–1480 (TRL).

Belongs to the ABC transporter superfamily. ABCC family. CFTR transporter (TC 3.A.1.202) subfamily. As to quaternary structure, monomer; does not require oligomerization for channel activity. May form oligomers in the membrane. Interacts with SLC26A3, SLC26A6 and NHERF1. Interacts with SHANK2. Interacts with MYO6. Interacts (via C-terminus) with GOPC (via PDZ domain); this promotes CFTR internalization and thereby decreases channel activity. Interacts with SLC4A7 through NHERF1. Found in a complex with MYO5B and RAB11A. Interacts with ANO1. Interacts with SLC26A8. Interacts with AHCYL1; the interaction increases CFTR activity. Interacts with CSE1L. The core-glycosylated form interacts with GORASP2 (via PDZ GRASP-type 1 domain) in respone to ER stress. Interacts with MARCHF2; the interaction leads to CFTR ubiqtuitination and degradation. Interacts with ADGRG2. In terms of processing, N-glycosylated. Phosphorylated; cAMP treatment promotes phosphorylation and activates the channel. Dephosphorylation decreases the ATPase activity (in vitro). Phosphorylation at PKA sites activates the channel. Phosphorylation at PKC sites enhances the response to phosphorylation by PKA. Phosphorylated by AMPK; this inhibits channel activity. Post-translationally, ubiquitinated, leading to its degradation in the lysosome. Deubiquitination by USP10 in early endosomes enhances its endocytic recycling to the cell membrane. Ubiquitinated by RNF185 during ER stress. Ubiquitinated by MARCHF2.

It is found in the apical cell membrane. It localises to the early endosome membrane. The protein localises to the cell membrane. The protein resides in the recycling endosome membrane. Its subcellular location is the endoplasmic reticulum membrane. It is found in the nucleus. It carries out the reaction ATP + H2O + closed Cl(-) channel = ADP + phosphate + open Cl(-) channel.. It catalyses the reaction chloride(in) = chloride(out). The catalysed reaction is hydrogencarbonate(in) = hydrogencarbonate(out). The enzyme catalyses ATP + H2O = ADP + phosphate + H(+). Its function is as follows. Epithelial ion channel that plays an important role in the regulation of epithelial ion and water transport and fluid homeostasis. Mediates the transport of chloride ions across the cell membrane. Possesses an intrinsic ATPase activity and utilizes ATP to gate its channel; the passive flow of anions through the channel is gated by cycles of ATP binding and hydrolysis by the ATP-binding domains. The ion channel is also permeable to HCO(3)(-); selectivity depends on the extracellular chloride concentration. Exerts its function also by modulating the activity of other ion channels and transporters. Contributes to the regulation of the pH and the ion content of the epithelial fluid layer. Modulates the activity of the epithelial sodium channel (ENaC) complex, in part by regulating the cell surface expression of the ENaC complex. May regulate bicarbonate secretion and salvage in epithelial cells by regulating the transporter SLC4A7. Can inhibit the chloride channel activity of ANO1. Plays a role in the chloride and bicarbonate homeostasis during sperm epididymal maturation and capacitation. This chain is Cystic fibrosis transmembrane conductance regulator, found in Nomascus leucogenys (Northern white-cheeked gibbon).